Reading from the N-terminus, the 195-residue chain is A-type ATP synthase subunit E (195 aa).

It belongs to the V-ATPase E subunit family. Has multiple subunits with at least A(3), B(3), C, D, E, F, H, I and proteolipid K(x).

It is found in the cell membrane. Component of the A-type ATP synthase that produces ATP from ADP in the presence of a proton gradient across the membrane. The chain is A-type ATP synthase subunit E from Staphylothermus marinus (strain ATCC 43588 / DSM 3639 / JCM 9404 / F1).